A 367-amino-acid polypeptide reads, in one-letter code: Pantothenate kinase CAB1 (367 aa).

The protein belongs to the type II pantothenate kinase family.

The protein resides in the cytoplasm. It localises to the nucleus. It carries out the reaction (R)-pantothenate + ATP = (R)-4'-phosphopantothenate + ADP + H(+). It participates in cofactor biosynthesis; coenzyme A biosynthesis; CoA from (R)-pantothenate: step 1/5. Regulated by feedback inhibition by malonyl-CoA. In terms of biological role, plays a role in the physiological regulation of the intracellular CoA concentration. The protein is Pantothenate kinase CAB1 (CAB1) of Saccharomyces cerevisiae (strain ATCC 204508 / S288c) (Baker's yeast).